Reading from the N-terminus, the 734-residue chain is Histone-lysine N-methyltransferase SET9 (734 aa).

Positions 116–230 constitute an SET domain; sequence CPFEVNATNR…LGEEITVTYS (115 aa). Disordered regions lie at residues 343-459, 523-543, 567-591, and 681-734; these read FDTT…TTET, AVPN…QQGA, AVST…KQRV, and RKPW…AMAQ. A compositionally biased stretch (basic and acidic residues) spans 407–418; it reads EEPKPPSMREKP. Residues 527-543 are compositionally biased toward polar residues; sequence SAPSQIQEAENNAQQGA. A compositionally biased stretch (basic and acidic residues) spans 578–587; that stretch reads SEKPAPEPVR.

It belongs to the class V-like SAM-binding methyltransferase superfamily. Histone-lysine methyltransferase family. Suvar4-20 subfamily.

It is found in the nucleus. It localises to the chromosome. The enzyme catalyses L-lysyl(20)-[histone H4] + 3 S-adenosyl-L-methionine = N(6),N(6),N(6)-trimethyl-L-lysyl(20)-[histone H4] + 3 S-adenosyl-L-homocysteine + 3 H(+). Histone methyltransferase that trimethylates 'Lys-20' of histone H4 to form H4K20me3. This chain is Histone-lysine N-methyltransferase SET9 (SET9), found in Chaetomium globosum (strain ATCC 6205 / CBS 148.51 / DSM 1962 / NBRC 6347 / NRRL 1970) (Soil fungus).